Reading from the N-terminus, the 520-residue chain is Ribonuclease Y (520 aa).

The helical transmembrane segment at 1–21 (MDIITIIIAVIAGIGGGFGIS) threads the bilayer. A KH domain is found at 210–276 (CVSVFNIESD…RLALHKLVTD (67 aa)). The HD domain occupies 336–429 (LLQHSREVSK…VQVCDAISGA (94 aa)).

This sequence belongs to the RNase Y family.

Its subcellular location is the cell membrane. Functionally, endoribonuclease that initiates mRNA decay. In Flavobacterium psychrophilum (strain ATCC 49511 / DSM 21280 / CIP 103535 / JIP02/86), this protein is Ribonuclease Y.